Here is a 256-residue protein sequence, read N- to C-terminus: 2,3,4,5-tetrahydropyridine-2,6-dicarboxylate N-acetyltransferase (256 aa).

It belongs to the transferase hexapeptide repeat family. DapH subfamily.

The enzyme catalyses (S)-2,3,4,5-tetrahydrodipicolinate + acetyl-CoA + H2O = L-2-acetamido-6-oxoheptanedioate + CoA. It participates in amino-acid biosynthesis; L-lysine biosynthesis via DAP pathway; LL-2,6-diaminopimelate from (S)-tetrahydrodipicolinate (acetylase route): step 1/3. Catalyzes the transfer of an acetyl group from acetyl-CoA to tetrahydrodipicolinate. This is 2,3,4,5-tetrahydropyridine-2,6-dicarboxylate N-acetyltransferase from Lactococcus lactis subsp. lactis (strain IL1403) (Streptococcus lactis).